Here is a 690-residue protein sequence, read N- to C-terminus: Lipase 2 (690 aa).

The signal sequence occupies residues 1 to 37 (MLRGQEERKYSIRKYSIGVVSVLAATMFVVSSHEAQA). The segment covering 52–71 (LNQPGEQGNAITSHQMQSGK) has biased composition (polar residues). A disordered region spans residues 52-266 (LNQPGEQGNA…KPTDKNTDNK (215 aa)). Residues 72–81 (QLDDMHKENG) show a composition bias toward basic and acidic residues. Polar residues-rich tracts occupy residues 82-114 (KSGT…NDNQ), 124-171 (SKQS…QPSI), and 185-206 (PTST…AQDA). Basic and acidic residues-rich tracts occupy residues 225–237 (IDAK…RQSE) and 257–266 (KPTDKNTDNK). Active-site charge relay system residues include S412 and H645.

It belongs to the AB hydrolase superfamily. Lipase family.

The protein resides in the secreted. It carries out the reaction a triacylglycerol + H2O = a diacylglycerol + a fatty acid + H(+). The polypeptide is Lipase 2 (lip2) (Staphylococcus aureus (strain NCTC 8325 / PS 47)).